Consider the following 344-residue polypeptide: Biotin synthase (344 aa).

Residues 40–267 (AQVQVSTLLS…KSMVRLSAGR (228 aa)) form the Radical SAM core domain. [4Fe-4S] cluster-binding residues include Cys-55, Cys-59, and Cys-62. Residues Cys-99, Cys-130, Cys-190, and Arg-262 each coordinate [2Fe-2S] cluster.

It belongs to the radical SAM superfamily. Biotin synthase family. In terms of assembly, homodimer. The cofactor is [4Fe-4S] cluster. [2Fe-2S] cluster serves as cofactor.

It carries out the reaction (4R,5S)-dethiobiotin + (sulfur carrier)-SH + 2 reduced [2Fe-2S]-[ferredoxin] + 2 S-adenosyl-L-methionine = (sulfur carrier)-H + biotin + 2 5'-deoxyadenosine + 2 L-methionine + 2 oxidized [2Fe-2S]-[ferredoxin]. The protein operates within cofactor biosynthesis; biotin biosynthesis; biotin from 7,8-diaminononanoate: step 2/2. Its function is as follows. Catalyzes the conversion of dethiobiotin (DTB) to biotin by the insertion of a sulfur atom into dethiobiotin via a radical-based mechanism. In Xanthomonas axonopodis pv. citri (strain 306), this protein is Biotin synthase.